The primary structure comprises 89 residues: Small ribosomal subunit protein uS15 (89 aa).

This sequence belongs to the universal ribosomal protein uS15 family. As to quaternary structure, part of the 30S ribosomal subunit. Forms a bridge to the 50S subunit in the 70S ribosome, contacting the 23S rRNA.

One of the primary rRNA binding proteins, it binds directly to 16S rRNA where it helps nucleate assembly of the platform of the 30S subunit by binding and bridging several RNA helices of the 16S rRNA. Functionally, forms an intersubunit bridge (bridge B4) with the 23S rRNA of the 50S subunit in the ribosome. The sequence is that of Small ribosomal subunit protein uS15 from Rhizobium rhizogenes (strain K84 / ATCC BAA-868) (Agrobacterium radiobacter).